The sequence spans 198 residues: FMN-dependent NADH:quinone oxidoreductase 6 (198 aa).

Residue 96–99 (MYNF) coordinates FMN.

The protein belongs to the azoreductase type 1 family. As to quaternary structure, homodimer. FMN serves as cofactor.

The catalysed reaction is 2 a quinone + NADH + H(+) = 2 a 1,4-benzosemiquinone + NAD(+). The enzyme catalyses N,N-dimethyl-1,4-phenylenediamine + anthranilate + 2 NAD(+) = 2-(4-dimethylaminophenyl)diazenylbenzoate + 2 NADH + 2 H(+). Its function is as follows. Quinone reductase that provides resistance to thiol-specific stress caused by electrophilic quinones. Functionally, also exhibits azoreductase activity. Catalyzes the reductive cleavage of the azo bond in aromatic azo compounds to the corresponding amines. The sequence is that of FMN-dependent NADH:quinone oxidoreductase 6 from Burkholderia lata (strain ATCC 17760 / DSM 23089 / LMG 22485 / NCIMB 9086 / R18194 / 383).